Here is a 124-residue protein sequence, read N- to C-terminus: uncharacterized protein (124 aa).

A dksA C4-type; degenerate zinc finger spans residues 73-94 (CEETGAPIPLAKLAVLPTARTA).

This is an uncharacterized protein from Bacillus subtilis (strain 168).